The sequence spans 326 residues: Glyceraldehyde-3-phosphate dehydrogenase, cytosolic (326 aa).

NAD(+)-binding positions include 2–3 (RI), D24, and R71. D-glyceraldehyde 3-phosphate contacts are provided by residues 142-144 (SCT), T173, 202-203 (TG), and R225. C143 (nucleophile) is an active-site residue. N307 contributes to the NAD(+) binding site.

Belongs to the glyceraldehyde-3-phosphate dehydrogenase family.

It localises to the cytoplasm. The catalysed reaction is D-glyceraldehyde 3-phosphate + phosphate + NAD(+) = (2R)-3-phospho-glyceroyl phosphate + NADH + H(+). Its pathway is carbohydrate degradation; glycolysis; pyruvate from D-glyceraldehyde 3-phosphate: step 1/5. In terms of biological role, key enzyme in glycolysis that catalyzes the first step of the pathway by converting D-glyceraldehyde 3-phosphate (G3P) into 3-phospho-D-glyceroyl phosphate. Essential for the maintenance of cellular ATP levels and carbohydrate metabolism. This is Glyceraldehyde-3-phosphate dehydrogenase, cytosolic (GAPC) from Nicotiana tabacum (Common tobacco).